The following is a 328-amino-acid chain: Homeobox protein Hox-C13 (328 aa).

A disordered region spans residues 23 to 48 (AAESGSGGGGGGGGAGGAGGGCSGAS). The span at 27-45 (GSGGGGGGGGAGGAGGGCS) shows a compositional bias: gly residues. The homeobox DNA-binding region spans 258 to 317 (GRKKRVPYTKVQLKELEKEYAASKFITKEKRRRISATTNLSERQVTIWFQNRRVKEKKVV).

Belongs to the Abd-B homeobox family. As to expression, expressed in differentiating keratinocytes. In the hair follicle lower matrix, expressed in all 3 hair shaft-forming compartments, i.e. cuticle, cortex and medulla. Expression stops sharply at the boundary with the germinal matrix compartment.

Its subcellular location is the nucleus. Transcription factor which plays a role in hair follicle differentiation. Regulates FOXQ1 expression and that of other hair-specific genes. This Mus musculus (Mouse) protein is Homeobox protein Hox-C13 (Hoxc13).